A 411-amino-acid chain; its full sequence is Citrate synthase (411 aa).

Catalysis depends on residues His304 and Asp363.

This sequence belongs to the citrate synthase family.

It carries out the reaction oxaloacetate + acetyl-CoA + H2O = citrate + CoA + H(+). The protein operates within carbohydrate metabolism; tricarboxylic acid cycle; isocitrate from oxaloacetate: step 1/2. This is Citrate synthase (gltA) from Rickettsia helvetica.